Consider the following 99-residue polypeptide: Large ribosomal subunit protein eL30 (99 aa).

This sequence belongs to the eukaryotic ribosomal protein eL30 family.

This Methanobrevibacter smithii (strain ATCC 35061 / DSM 861 / OCM 144 / PS) protein is Large ribosomal subunit protein eL30.